The following is a 299-amino-acid chain: Anti-sigma-D factor RsdA (299 aa).

The chain crosses the membrane as a helical span at residues 86–106 (LAAVGSVAAALLVLSGFGAVV). Positions 187–299 (NTKVETRDPN…APETPVSPTH (113 aa)) are disordered. 2 stretches are compositionally biased toward low complexity: residues 201 to 212 (PGSPSNPAAPGS) and 250 to 271 (PNST…EPGS).

Interacts with ECF RNA polymerase sigma factor SigD; this should inhibit the interaction of SigD with the RNA polymerase catalytic core. Post-translationally, the cytosolic fragment is degraded by a ClpP1-ClpP2-ClpX complex, as would be expected after S1P and S2P intramembrane proteolysis. This releases SigD so that it may bind to the RNA polymerase catalytic core.

It is found in the cell membrane. In terms of biological role, an anti-sigma factor for extracytoplasmic function (ECF) sigma factor SigD. ECF sigma factors are held in an inactive form by an anti-sigma factor until released by regulated intramembrane proteolysis (RIP). RIP occurs when an extracytoplasmic signal triggers a concerted proteolytic cascade to transmit information and elicit cellular responses. The membrane-spanning regulatory substrate protein is first cut extracytoplasmically (site-1 protease, S1P), then within the membrane itself (site-2 protease, S2P), while cytoplasmic proteases finish degrading the regulatory protein, liberating the sigma factor. Neither S1P nor S2P proteases have been so far identified for this anti-sigma factor. This Mycobacterium bovis (strain ATCC BAA-935 / AF2122/97) protein is Anti-sigma-D factor RsdA (rsda).